Consider the following 271-residue polypeptide: Pyrroline-5-carboxylate reductase (271 aa).

It belongs to the pyrroline-5-carboxylate reductase family.

The protein localises to the cytoplasm. It catalyses the reaction L-proline + NADP(+) = (S)-1-pyrroline-5-carboxylate + NADPH + 2 H(+). It carries out the reaction L-proline + NAD(+) = (S)-1-pyrroline-5-carboxylate + NADH + 2 H(+). It functions in the pathway amino-acid biosynthesis; L-proline biosynthesis; L-proline from L-glutamate 5-semialdehyde: step 1/1. Its function is as follows. Catalyzes the reduction of 1-pyrroline-5-carboxylate (PCA) to L-proline. The chain is Pyrroline-5-carboxylate reductase from Haemophilus influenzae (strain ATCC 51907 / DSM 11121 / KW20 / Rd).